We begin with the raw amino-acid sequence, 867 residues long: Ent-copalyl diphosphate synthase 1, chloroplastic (867 aa).

The N-terminal 35 residues, 1–35 (MIHLHSPPTAPAAFGGAGSADWRRRRRWSWSSSSR), are a transit peptide targeting the chloroplast. Residues 1-134 (MIHLHSPPTA…ADEEADDELQ (134 aa)) form a disordered region. Residues 51–64 (RGGDDGGGEDHHAD) are compositionally biased toward basic and acidic residues. The span at 74–89 (AWRARATTAGVSSSSS) shows a compositional bias: low complexity. Positions 99–121 (IEHETPRITKWPNESRDLDDHQQ) are enriched in basic and acidic residues. The span at 124-133 (EADEEADDEL) shows a compositional bias: acidic residues. K286 contacts substrate. The DXDD motif signature appears at 418-421 (EVDD). Residue K504 coordinates substrate.

It belongs to the terpene synthase family. Mg(2+) serves as cofactor.

It is found in the plastid. The protein resides in the chloroplast. The catalysed reaction is (2E,6E,10E)-geranylgeranyl diphosphate = ent-copalyl diphosphate. It functions in the pathway plant hormone biosynthesis; gibberellin biosynthesis. Catalyzes the conversion of geranylgeranyl diphosphate to the gibberellin precursor ent-copalyl diphosphate. The sequence is that of Ent-copalyl diphosphate synthase 1, chloroplastic (CPS1) from Oryza sativa subsp. japonica (Rice).